The following is a 338-amino-acid chain: MLVLINTIQEQASEAIKQATDIVALEQIRVDFLGKKGKLTELLKGLANLSAEEKPKVGQLVNQAKQGISALIETKMIELKEKQLLAKLAAEQIDVTLPGRNHSTGSLHPVTQVKHRINDYFSRLGFDIVEGPEIETEFYNFEALNIPGHHPARAMHDTFYFGDGRLLRTHTSPVQIRTMEQRKPPFRLIAPGRVYRCDSDVTHTPMFHQVEGLLIDKQATLAGLKGLLQDFFSYFFGRELALRFRPSYFPFTEPSAEVDIECTQCNGKGCRSCKFTGWLEVLGCGMVHPNVLIAVNIDPNEYHGWAFGMGMDRLAMLYYGIDDLRMLFENDLTFLRQF.

Residue Glu-253 participates in Mg(2+) binding.

This sequence belongs to the class-II aminoacyl-tRNA synthetase family. Phe-tRNA synthetase alpha subunit type 1 subfamily. Tetramer of two alpha and two beta subunits. The cofactor is Mg(2+).

It localises to the cytoplasm. The enzyme catalyses tRNA(Phe) + L-phenylalanine + ATP = L-phenylalanyl-tRNA(Phe) + AMP + diphosphate + H(+). The protein is Phenylalanine--tRNA ligase alpha subunit of Legionella pneumophila (strain Lens).